The primary structure comprises 192 residues: Dihydrofolate reductase (192 aa).

In terms of domain architecture, DHFR spans 5-191 (NVAIIVAALK…FTYNYTLWTR (187 aa)). Residues A11 and 18 to 24 (GIGYKGK) each bind NADP(+). 32-37 (EIRYFK) is a substrate binding site. 56-58 (RKT) is a binding site for NADP(+). R72 contacts substrate. Position 78-80 (78-80 (SRS)) interacts with NADP(+). Residues I112 and Y118 each contribute to the substrate site. 113–120 (GGAEIYNE) serves as a coordination point for NADP(+).

The protein belongs to the dihydrofolate reductase family.

The enzyme catalyses (6S)-5,6,7,8-tetrahydrofolate + NADP(+) = 7,8-dihydrofolate + NADPH + H(+). The protein operates within cofactor biosynthesis; tetrahydrofolate biosynthesis; 5,6,7,8-tetrahydrofolate from 7,8-dihydrofolate: step 1/1. Its function is as follows. Key enzyme in folate metabolism. Catalyzes an essential reaction for de novo glycine and purine synthesis, and for DNA precursor synthesis. The protein is Dihydrofolate reductase (DFR1) of Candida albicans (Yeast).